Reading from the N-terminus, the 519-residue chain is MQKPIPRKMYILVPDKPAQIQNESAIAAKTISSVIRTCLGPRAMQKMVLTKINSIELTNDGNAILRELDVAHPSARSLIELAKTQDDEVGDGTTSVVLLAAEILNEMTYILDRDVHPIRICKALGRALEICIKAIDGAAISLDSNEETKIKIINGSVASKICNILKVPIGNLALEAVKKVYVKEENKCDLKNNMKVEKVLGGNLMESEVVDGVLINKDIIHPQMRRVIENPRIVIIESPLEYKKGESQTNYEFSKENDFTRALEIEEEQVREMCERIIGVRPDIVVCEKGISDLALSILFENNITGLRRLKKTDISRLSKVCGARSVSRPEDLEERHVGVSCGLFEYIKYGEEYYCKFSRCAHPKACSVVIRGPTKDILDELERNFMDAVKVAKSIFISPKLCPGGGAAEMAMAHELMQSAGDNEVEAEVFSRMASALTIIPSILLENSGVFNPLEAITLLEQKHKEGSFYGVNGTTGEIVDTRDLVLEPYAVKSQCIKSAVEAVSQLLRIDGIIESKR.

It belongs to the TCP-1 chaperonin family. In terms of assembly, component of the T-complex protein 1 (TCP1) complex.

The protein resides in the cytoplasm. In terms of biological role, molecular chaperone; assists the folding of proteins upon ATP hydrolysis. The chain is T-complex protein 1 subunit gamma (CCT3) from Encephalitozoon cuniculi (strain GB-M1) (Microsporidian parasite).